A 297-amino-acid chain; its full sequence is Bifunctional protein FolD 1 (297 aa).

Residues 174–176, serine 199, and isoleucine 240 contribute to the NADP(+) site; that span reads GRS.

The protein belongs to the tetrahydrofolate dehydrogenase/cyclohydrolase family. In terms of assembly, homodimer.

It carries out the reaction (6R)-5,10-methylene-5,6,7,8-tetrahydrofolate + NADP(+) = (6R)-5,10-methenyltetrahydrofolate + NADPH. The enzyme catalyses (6R)-5,10-methenyltetrahydrofolate + H2O = (6R)-10-formyltetrahydrofolate + H(+). It participates in one-carbon metabolism; tetrahydrofolate interconversion. In terms of biological role, catalyzes the oxidation of 5,10-methylenetetrahydrofolate to 5,10-methenyltetrahydrofolate and then the hydrolysis of 5,10-methenyltetrahydrofolate to 10-formyltetrahydrofolate. The sequence is that of Bifunctional protein FolD 1 from Acinetobacter baylyi (strain ATCC 33305 / BD413 / ADP1).